We begin with the raw amino-acid sequence, 248 residues long: Protein PIMREG (248 aa).

Over residues 1 to 10 (MASRWQNMGT) the composition is skewed to polar residues. Positions 1–32 (MASRWQNMGTSVRRRSLQHQEQLEDSKELQPV) are disordered. Phosphoserine occurs at positions 11 and 16. 2 short sequence motifs (D-box) span residues 14 to 17 (RRSL) and 53 to 56 (RLPL). The interval 117 to 205 (KARRRKRGAQ…PSESDSDLEP (89 aa)) is disordered. Serine 129 carries the post-translational modification Phosphoserine. A Phosphoserine; by UHMK1; in vitro modification is found at serine 131. 2 stretches are compositionally biased toward polar residues: residues 132-143 (PTHSLSQKSTRL) and 186-198 (PYSS…SPSE). Phosphoserine is present on residues serine 199 and serine 201.

Isoform 1 and isoform 2 interact with PICALM; this interaction may target PICALM to the nucleus. During mitosis, associates with HDAC2 and MTA2 subunits of the chromatin-remodeling NuRD complex; this association is strongest at prometaphase and decreases as the cell progresses through metaphase and anaphase. In terms of processing, ubiquitinated by the anaphase-promoting complex/cyclosome (APC/C) complex in the presence of FZR1, leading to its degradation by the proteasome during mitotic exit. However, degradation is not essential for normal mitotic progression within a single cell cycle. Expressed in thymus (at protein level). Detected in spleen, colon, ovary and small intestines.

It is found in the nucleus. The protein resides in the nucleolus. Functionally, during mitosis, may play a role in the control of metaphase-to-anaphase transition. The sequence is that of Protein PIMREG from Homo sapiens (Human).